Reading from the N-terminus, the 419-residue chain is Mitogen-activated protein kinase pmk-2 (419 aa).

Positions 49–350 (YNSLKPLGEG…VSSALRHDYL (302 aa)) constitute a Protein kinase domain. Residues 55–63 (LGEGAYGVV) and lysine 78 contribute to the ATP site. Aspartate 210 acts as the Proton acceptor in catalysis. Position 222 is a phosphothreonine (threonine 222). Positions 222 to 224 (TGY) match the TXY motif. The residue at position 224 (tyrosine 224) is a Phosphotyrosine.

The protein belongs to the protein kinase superfamily. CMGC Ser/Thr protein kinase family. MAP kinase subfamily. Mg(2+) serves as cofactor. Dually phosphorylated on Thr-222 and Tyr-224, which activates the enzyme.

Its subcellular location is the cytoplasm. It catalyses the reaction L-seryl-[protein] + ATP = O-phospho-L-seryl-[protein] + ADP + H(+). It carries out the reaction L-threonyl-[protein] + ATP = O-phospho-L-threonyl-[protein] + ADP + H(+). Its activity is regulated as follows. Activated by phosphorylation on threonine and tyrosine. Inhibited by pyridinyl-imidazole related compounds. Responds to activation by environmental stress and pro-inflammatory cytokines by phosphorylating downstream targets. The protein is Mitogen-activated protein kinase pmk-2 (pmk-2) of Caenorhabditis elegans.